A 162-amino-acid polypeptide reads, in one-letter code: Peptide deformylase-like (162 aa).

This sequence belongs to the polypeptide deformylase family.

The chain is Peptide deformylase-like from Staphylococcus aureus (strain MRSA252).